We begin with the raw amino-acid sequence, 506 residues long: Xaa-Pro aminopeptidase 3 (506 aa).

The N-terminal 31 residues, 1–31 (MPSLLSTPKLAPVLARLRGLSGCMSCLQRRY), are a transit peptide targeting the mitochondrion. An interaction with TNFRSF1B region spans residues 54-79 (HPHLLRPGEVTPGLSQVEYALRRHKL). Y300, D331, D342, H423, H430, E450, and E474 together coordinate substrate. Positions 331, 342, and 423 each coordinate Mn(2+). Mn(2+)-binding residues include E450 and E474.

It belongs to the peptidase M24B family. As to quaternary structure, homodimer. Interacts with TNFRSF1B/TNFR2 (activated) and TRAF2. It depends on Mn(2+) as a cofactor. As to expression, expressed in brain, kidney, heart, liver, skeletal muscle and testis.

The protein localises to the mitochondrion. Its subcellular location is the cytoplasm. The enzyme catalyses Release of any N-terminal amino acid, including proline, that is linked to proline, even from a dipeptide or tripeptide.. In terms of biological role, catalyzes the removal of a penultimate prolyl residue from the N-termini of peptides, such as Leu-Pro-Ala. Also shows low activity towards peptides with Ala or Ser at the P1 position. Promotes TNFRSF1B-mediated phosphorylation of MAPK8/JNK1 and MAPK9/JNK2, suggesting a function as an adapter protein for TNFRSF1B; the effect is independent of XPNPEP3 peptidase activity. May inhibit apoptotic cell death induced via TNF-TNFRSF1B signaling. This chain is Xaa-Pro aminopeptidase 3 (Xpnpep3), found in Mus musculus (Mouse).